The primary structure comprises 332 residues: Tetraacyldisaccharide 4'-kinase (332 aa).

60–67 (TVGGTGKT) lines the ATP pocket.

The protein belongs to the LpxK family.

It carries out the reaction a lipid A disaccharide + ATP = a lipid IVA + ADP + H(+). It functions in the pathway glycolipid biosynthesis; lipid IV(A) biosynthesis; lipid IV(A) from (3R)-3-hydroxytetradecanoyl-[acyl-carrier-protein] and UDP-N-acetyl-alpha-D-glucosamine: step 6/6. Its function is as follows. Transfers the gamma-phosphate of ATP to the 4'-position of a tetraacyldisaccharide 1-phosphate intermediate (termed DS-1-P) to form tetraacyldisaccharide 1,4'-bis-phosphate (lipid IVA). In Pseudomonas aeruginosa (strain LESB58), this protein is Tetraacyldisaccharide 4'-kinase.